Here is a 138-residue protein sequence, read N- to C-terminus: MLQPARTKYRKMQKGRMRGKAYRGSDLAQGEYGLQATECGRLTSRQIEAARVAITRYVKRGGKLWIRVFPDKPITKKPAETRMGTGKGNVEFYVAVIKPGRVLYELAGVDDASAKKAFHLAAHKLPVATKMVKRGETL.

Belongs to the universal ribosomal protein uL16 family. As to quaternary structure, part of the 50S ribosomal subunit.

In terms of biological role, binds 23S rRNA and is also seen to make contacts with the A and possibly P site tRNAs. This Anaeromyxobacter dehalogenans (strain 2CP-1 / ATCC BAA-258) protein is Large ribosomal subunit protein uL16.